Here is a 488-residue protein sequence, read N- to C-terminus: Probable phenylalanine--tRNA ligase alpha subunit (488 aa).

The interval 1-146 (MSIEQDILNL…KRKLVDINKK (146 aa)) is contains the major tRNA-Phe binding sites. L-phenylalanine is bound by residues threonine 315, 363–365 (QVE), and tyrosine 403. Position 405 (glutamate 405) interacts with Mg(2+). Phenylalanine 429 contributes to the L-phenylalanine binding site.

This sequence belongs to the class-II aminoacyl-tRNA synthetase family. Phe-tRNA synthetase alpha subunit type 2 subfamily. As to quaternary structure, tetramer of two alpha and two beta subunits. Mg(2+) is required as a cofactor.

It is found in the cytoplasm. The enzyme catalyses tRNA(Phe) + L-phenylalanine + ATP = L-phenylalanyl-tRNA(Phe) + AMP + diphosphate + H(+). The sequence is that of Probable phenylalanine--tRNA ligase alpha subunit from Enterocytozoon bieneusi (strain H348) (Microsporidian parasite).